The primary structure comprises 256 residues: Hemin import ATP-binding protein HmuV (256 aa).

The region spanning 2 to 239 (IHAFAVSVIR…ANVREVYQVD (238 aa)) is the ABC transporter domain. Residue 34–41 (GPNGAGKS) coordinates ATP.

The protein belongs to the ABC transporter superfamily. Heme (hemin) importer (TC 3.A.1.14.5) family. The complex is composed of two ATP-binding proteins (HmuV), two transmembrane proteins (HmuU) and a solute-binding protein (HmuT).

It localises to the cell inner membrane. In terms of biological role, part of the ABC transporter complex HmuTUV involved in hemin import. Responsible for energy coupling to the transport system. The sequence is that of Hemin import ATP-binding protein HmuV from Hahella chejuensis (strain KCTC 2396).